Here is a 306-residue protein sequence, read N- to C-terminus: Ankyrin repeat domain-containing protein 23 (306 aa).

The stretch at glutamine 41 to lysine 90 forms a coiled coil. The interval leucine 78–proline 107 is disordered. Positions glutamine 80–valine 91 are enriched in basic residues. ANK repeat units lie at residues leucine 144 to valine 173, leucine 177 to alanine 206, isoleucine 210 to alanine 239, and glutamate 243 to valine 272. Residues arginine 179–arginine 196 are interaction with TTN.

In terms of assembly, interacts with titin/TTN and MYPN.

It localises to the nucleus. May be involved in the energy metabolism. Could be a molecular link between myofibrillar stretch-induced signaling pathways and muscle gene expression. The chain is Ankyrin repeat domain-containing protein 23 (Ankrd23) from Mus musculus (Mouse).